A 1434-amino-acid polypeptide reads, in one-letter code: Protein patched homolog 1 (1434 aa).

Positions 1-13 (MASAGNAAGALGR) are enriched in low complexity. The disordered stretch occupies residues 1–34 (MASAGNAAGALGRQAGGGRRRRTGGPHRAAPDRD). The Cytoplasmic segment spans residues 1-86 (MASAGNAAGA…GCYIQKNCGK (86 aa)). A helical transmembrane segment spans residues 87–107 (FLVVGLLIFGAFAVGLKAANL). Topologically, residues 108–422 (ETNVEELWVE…LDDILKSFSD (315 aa)) are extracellular. Residues Asn127, Asn298, Asn335, and Asn400 are each glycosylated (N-linked (GlcNAc...) asparagine). A helical transmembrane segment spans residues 423–443 (VSVIRVASGYLLMLAYACLTM). An SSD domain is found at 424-584 (SVIRVASGYL…LLIFPAILSM (161 aa)). Residues 444–458 (LRWDCSKSQGAVGLA) are Cytoplasmic-facing. A helical membrane pass occupies residues 459–479 (GVLLVALSVAAGLGLCSLIGI). The Extracellular portion of the chain corresponds to 480–487 (SFNAATTQ). Residues 488 to 508 (VLPFLALGVGVDDVFLLAHAF) traverse the membrane as a helical segment. Over 509 to 533 (SETGQNKRIPFEDRTGECLKRTGAS) the chain is Cytoplasmic. The chain crosses the membrane as a helical span at residues 534 to 554 (VALTSISNVTAFFMAALIPIP). The Extracellular segment spans residues 555-563 (ALRAFSLQA). Residues 564–584 (AVVVVFNFAMVLLIFPAILSM) traverse the membrane as a helical segment. At 585 to 734 (DLYRREDRRL…HYAPFLLKPK (150 aa)) the chain is on the cytoplasmic side. Residues 735–755 (AKVVVILLFLGLLGVSLYGTT) form a helical membrane-spanning segment. Topologically, residues 756–1013 (RVRDGLDLTD…WEQYISLRHW (258 aa)) are extracellular. 2 N-linked (GlcNAc...) asparagine glycosylation sites follow: Asn861 and Asn986. Residues 1014–1034 (LLLSISVVLACTFLVCAVFLL) form a helical membrane-spanning segment. The Cytoplasmic portion of the chain corresponds to 1035–1039 (NPWTA). A helical transmembrane segment spans residues 1040–1060 (GIIVMVLALMTVELFGMMGLI). Residues 1061-1069 (GIKLSAVPV) lie on the Extracellular side of the membrane. A helical transmembrane segment spans residues 1070–1090 (VILIASVGIGVEFTVHVALAF). Over 1091 to 1107 (LTAIGDKNHRAMLALEH) the chain is Cytoplasmic. A helical transmembrane segment spans residues 1108 to 1128 (MFAPVLDGAVSTLLGVLMLAG). Residues 1129–1140 (SEFDFIVRYFFA) are Extracellular-facing. The helical transmembrane segment at 1141-1161 (VLAILTVLGVLNGLVLLPVLL) threads the bilayer. Topologically, residues 1162–1434 (SFFGPCPEVS…EERPWGSSSN (273 aa)) are cytoplasmic. Disordered regions lie at residues 1175–1219 (GLNR…TVSG), 1257–1348 (HPDS…SSVP), and 1368–1396 (HPPP…HGVF). Position 1181 is a phosphothreonine (Thr1181). Ser1183 carries the post-translational modification Phosphoserine. The span at 1204-1213 (SDSSDSEYSS) shows a compositional bias: low complexity. Over residues 1288–1297 (PRRDPPREGL) the composition is skewed to basic and acidic residues. A compositionally biased stretch (polar residues) spans 1335-1348 (PRNPTSTAMGSSVP). Residue Lys1413 forms a Glycyl lysine isopeptide (Lys-Gly) (interchain with G-Cter in ubiquitin) linkage.

The protein belongs to the patched family. Interacts with SNX17. Interacts with IHH. Interacts with G-protein coupled receptor GPR37L1. Glycosylation is necessary for SHH binding. Post-translationally, in the absence of Hh ligands, ubiquitination by ITCH at Lys-1413 promotes endocytosis and both proteasomal and lysosomal degradation. Detected in cerebellar Bergmann glia cells (at protein level). In the developing embryo, first detected within the ventral neural tube and later in the somites and limb buds. Expression in the limb buds is restricted to the posterior ectoderm surrounding the zone of polarizing activity. In the adult, expression is seen in brain, lung, liver, kidney and ocular tissues; lower levels in heart, skeletal muscle, and testis.

Its subcellular location is the cell membrane. Acts as a receptor for sonic hedgehog (SHH), indian hedgehog (IHH) and desert hedgehog (DHH). Associates with the smoothened protein (SMO) to transduce the hedgehog's proteins signal. Seems to have a tumor suppressor function, as inactivation of this protein is probably a necessary, if not sufficient step for tumorigenesis. The polypeptide is Protein patched homolog 1 (Ptch1) (Mus musculus (Mouse)).